A 1252-amino-acid polypeptide reads, in one-letter code: LRR receptor-like serine/threonine-protein kinase GSO2 (1252 aa).

Positions 1 to 22 (MQQNSVLLALFFLCFSSGLGSG) are cleaved as a signal peptide. Residues 23–876 (QPGQRDDLQT…QRSLSPKTVV (854 aa)) are Extracellular-facing. Residues Asn-62, Asn-77, and Asn-117 are each glycosylated (N-linked (GlcNAc...) asparagine). 10 LRR repeats span residues 94-118 (FNNL…LSNL), 120-143 (SSLE…LGSL), 144-166 (VNLK…TFGN), 168-190 (VNLQ…RFGR), 191-215 (LVQL…IGNC), 217-239 (SLAL…LNRL), 240-263 (KNLQ…LGDL), 265-286 (SIQY…RLTE), 287-310 (LANL…EFWR), and 312-335 (NQLE…ICSN). Asn-157 carries N-linked (GlcNAc...) asparagine glycosylation. N-linked (GlcNAc...) asparagine glycans are attached at residues Asn-214 and Asn-229. N-linked (GlcNAc...) asparagine glycosylation occurs at Asn-299. N-linked (GlcNAc...) asparagine glycosylation occurs at Asn-336. LRR repeat units lie at residues 337 to 360 (TSLK…ISNC), 361 to 384 (QSLK…LFQL), 386 to 408 (ELTN…ISNL), 409 to 433 (TNLQ…GFLG), 435 to 456 (LEIM…IGNC), 457 to 480 (TRLQ…IGRL), 481 to 504 (KDLT…LGNC), 506 to 528 (QMTV…FGFL), 529 to 552 (TALE…LINL), 554 to 575 (NLTR…LCGS), 577 to 599 (SYLS…LGKS), 600 to 622 (TNLD…TFGK), 623 to 648 (ISEL…GLCK), 650 to 670 (LTHI…WLGK), 671 to 695 (LPLL…IFSL), 697 to 719 (NILT…IGNL), 720 to 743 (QALN…IGKL), 745 to 767 (KLFE…IGQL), 768 to 792 (QDLQ…ISTL), 793 to 816 (PKLE…IGDM), and 818 to 839 (SLGY…QFSR). Asn-370, Asn-394, and Asn-407 each carry an N-linked (GlcNAc...) asparagine glycan. The N-linked (GlcNAc...) asparagine glycan is linked to Asn-455. 4 N-linked (GlcNAc...) asparagine glycosylation sites follow: Asn-538, Asn-554, Asn-559, and Asn-566. Asn-709 carries N-linked (GlcNAc...) asparagine glycosylation. An N-linked (GlcNAc...) asparagine glycan is attached at Asn-780. N-linked (GlcNAc...) asparagine glycosylation occurs at Asn-823. The helical transmembrane segment at 877 to 897 (IISAISSLAAIALMVLVIILF) threads the bilayer. The Cytoplasmic segment spans residues 898–1252 (FKQNHDLFKK…YREMQTDTDK (355 aa)). Thr-945 is subject to Phosphothreonine. The region spanning 948–1232 (LNEEFMIGSG…PSSRQASEYL (285 aa)) is the Protein kinase domain. ATP is bound by residues 954 to 962 (IGSGGSGKV) and Lys-976. Residues Tyr-1024 and Tyr-1066 each carry the phosphotyrosine modification. Asp-1079 (proton acceptor) is an active-site residue. Phosphoserine is present on Ser-1114. Phosphotyrosine occurs at positions 1124 and 1131.

It belongs to the protein kinase superfamily. Ser/Thr protein kinase family. As to quaternary structure, interacts with CIF1 and CIF2. Mostly expressed in siliques, seeds, developing embryos and seedlings, detected in flower buds, but not in roots, leaves or stems.

The protein localises to the cell membrane. It carries out the reaction L-seryl-[protein] + ATP = O-phospho-L-seryl-[protein] + ADP + H(+). It catalyses the reaction L-threonyl-[protein] + ATP = O-phospho-L-threonyl-[protein] + ADP + H(+). Together with GSO1, receptor-like serine/threonine-kinase required during the development of the epidermal surface in embryos and cotyledons. Involved in the nuclear division phase of megagametogenesis. In coordination with GSO2, regulates root growth through control of cell division and cell fate specification. Controls seedling root growth by modulating sucrose response after germination. Receptor of the peptide hormones CIF1 and CIF2 required for contiguous Casparian strip diffusion barrier formation in roots. The protein is LRR receptor-like serine/threonine-protein kinase GSO2 of Arabidopsis thaliana (Mouse-ear cress).